The primary structure comprises 306 residues: RNA-binding protein Raly (306 aa).

Ser2 carries the post-translational modification N-acetylserine. Residue Lys4 forms a Glycyl lysine isopeptide (Lys-Gly) (interchain with G-Cter in SUMO2) linkage. An RRM domain is found at 21–92; it reads SRVFIGNLNT…QTLDINMAGE (72 aa). An N6-acetyllysine modification is found at Lys44. Phosphoserine is present on Ser63. Glycyl lysine isopeptide (Lys-Gly) (interchain with G-Cter in SUMO2) cross-links involve residues Lys94 and Lys99. Residues Ser106 and Ser135 each carry the phosphoserine modification. A Glycyl lysine isopeptide (Lys-Gly) (interchain with G-Cter in SUMO2) cross-link involves residue Lys159. Position 165 is an N6-acetyllysine; alternate (Lys165). Lys165 participates in a covalent cross-link: Glycyl lysine isopeptide (Lys-Gly) (interchain with G-Cter in SUMO2); alternate. Residues Lys179 and Lys191 each participate in a glycyl lysine isopeptide (Lys-Gly) (interchain with G-Cter in SUMO2) cross-link. Residues 183 to 216 are a coiled coil; it reads KSSELQAIKTELTQIKSNIDALLSRLEQIAAEQK. The disordered stretch occupies residues 215–306; it reads QKANPDGKKK…DTDADDGALQ (92 aa). The segment covering 217 to 226 has biased composition (basic and acidic residues); sequence ANPDGKKKGD. The segment covering 227-252 has biased composition (gly residues); it reads GGGAGGGGGGGGSGGGGSGGGGGGGS. The epitope (recognized by BKRF1 antibodies) stretch occupies residues 227-253; it reads GGGAGGGGGGGGSGGGGSGGGGGGGSS. Position 262 is a phosphothreonine (Thr262). At Ser264 the chain carries Phosphoserine. Position 286 is a phosphothreonine (Thr286). A compositionally biased stretch (basic and acidic residues) spans 287-297; the sequence is HSEEELEHSQD. 2 positions are modified to phosphoserine: Ser288 and Ser295. Residue Thr298 is modified to Phosphothreonine.

The protein belongs to the RRM HNRPC family. RALY subfamily. Identified in the spliceosome C complex. Interacts (through its RNA-binding domain) with FUS (through its RNA-binding domain); both are components of the same RNPs. As to expression, expressed in heart, brain, lung, liver, skeletal muscle, kidney and pancreas. Weakly expressed in placenta.

The protein resides in the nucleus. Functionally, RNA-binding protein that acts as a transcriptional cofactor for cholesterol biosynthetic genes in the liver. Binds the lipid-responsive non-coding RNA LeXis and is required for LeXis-mediated effect on cholesterogenesis. May be a heterogeneous nuclear ribonucleoprotein (hnRNP). The sequence is that of RNA-binding protein Raly (RALY) from Homo sapiens (Human).